We begin with the raw amino-acid sequence, 172 residues long: 3-hydroxydecanoyl-[acyl-carrier-protein] dehydratase (172 aa).

His-71 is a catalytic residue.

Belongs to the thioester dehydratase family. FabA subfamily. In terms of assembly, homodimer.

It is found in the cytoplasm. It catalyses the reaction a (3R)-hydroxyacyl-[ACP] = a (2E)-enoyl-[ACP] + H2O. The enzyme catalyses (3R)-hydroxydecanoyl-[ACP] = (2E)-decenoyl-[ACP] + H2O. It carries out the reaction (2E)-decenoyl-[ACP] = (3Z)-decenoyl-[ACP]. It participates in lipid metabolism; fatty acid biosynthesis. Necessary for the introduction of cis unsaturation into fatty acids. Catalyzes the dehydration of (3R)-3-hydroxydecanoyl-ACP to E-(2)-decenoyl-ACP and then its isomerization to Z-(3)-decenoyl-ACP. Can catalyze the dehydratase reaction for beta-hydroxyacyl-ACPs with saturated chain lengths up to 16:0, being most active on intermediate chain length. The polypeptide is 3-hydroxydecanoyl-[acyl-carrier-protein] dehydratase (Brucella anthropi (strain ATCC 49188 / DSM 6882 / CCUG 24695 / JCM 21032 / LMG 3331 / NBRC 15819 / NCTC 12168 / Alc 37) (Ochrobactrum anthropi)).